A 635-amino-acid chain; its full sequence is BTB/POZ domain-containing protein SETH6 (635 aa).

Residues serine 39–serine 104 form the BTB domain. One can recognise an NPH3 domain in the interval aspartate 206–arginine 494. Tyrosine 435 carries the phosphotyrosine modification. Positions glutamine 604–serine 635 are disordered. Basic and acidic residues predominate over residues lysine 612–phenylalanine 624. Residues methionine 625–serine 635 show a composition bias toward basic residues.

This sequence belongs to the NPH3 family.

It participates in protein modification; protein ubiquitination. Functionally, may act as a substrate-specific adapter of an E3 ubiquitin-protein ligase complex (CUL3-RBX1-BTB) which mediates the ubiquitination and subsequent proteasomal degradation of target proteins. This chain is BTB/POZ domain-containing protein SETH6 (SETH6), found in Arabidopsis thaliana (Mouse-ear cress).